The following is a 200-amino-acid chain: Small ribosomal subunit protein uS4 (200 aa).

The segment at 21 to 42 (GTGKELQKRPYPPGQHGPGQRR) is disordered. The region spanning 92–155 (SRLDNLVYRL…RNLQVIKEAI (64 aa)) is the S4 RNA-binding domain.

This sequence belongs to the universal ribosomal protein uS4 family. In terms of assembly, part of the 30S ribosomal subunit. Contacts protein S5. The interaction surface between S4 and S5 is involved in control of translational fidelity.

One of the primary rRNA binding proteins, it binds directly to 16S rRNA where it nucleates assembly of the body of the 30S subunit. Functionally, with S5 and S12 plays an important role in translational accuracy. In Geobacillus thermodenitrificans (strain NG80-2), this protein is Small ribosomal subunit protein uS4.